Consider the following 209-residue polypeptide: ATP-dependent Clp protease proteolytic subunit (209 aa).

The Nucleophile role is filled by S103. Residue H128 is part of the active site.

It belongs to the peptidase S14 family. As to quaternary structure, fourteen ClpP subunits assemble into 2 heptameric rings which stack back to back to give a disk-like structure with a central cavity, resembling the structure of eukaryotic proteasomes.

Its subcellular location is the cytoplasm. The enzyme catalyses Hydrolysis of proteins to small peptides in the presence of ATP and magnesium. alpha-casein is the usual test substrate. In the absence of ATP, only oligopeptides shorter than five residues are hydrolyzed (such as succinyl-Leu-Tyr-|-NHMec, and Leu-Tyr-Leu-|-Tyr-Trp, in which cleavage of the -Tyr-|-Leu- and -Tyr-|-Trp bonds also occurs).. Its function is as follows. Cleaves peptides in various proteins in a process that requires ATP hydrolysis. Has a chymotrypsin-like activity. Plays a major role in the degradation of misfolded proteins. In Lawsonia intracellularis (strain PHE/MN1-00), this protein is ATP-dependent Clp protease proteolytic subunit.